Here is a 410-residue protein sequence, read N- to C-terminus: Dual-specificity RNA methyltransferase RlmN (410 aa).

The disordered stretch occupies residues 7 to 26 (VSSENLDGQQQSSSTPASPA). Residues 15–26 (QQQSSSTPASPA) are compositionally biased toward low complexity. Catalysis depends on E120, which acts as the Proton acceptor. The Radical SAM core domain maps to 130–373 (TGSRKTLCIS…CTIRQTRGDD (244 aa)). An intrachain disulfide couples C137 to C378. [4Fe-4S] cluster is bound by residues C144, C148, and C151. S-adenosyl-L-methionine is bound by residues 200-201 (GE), S232, 254-256 (SLH), and N335. The active-site S-methylcysteine intermediate is C378.

The protein belongs to the radical SAM superfamily. RlmN family. Requires [4Fe-4S] cluster as cofactor.

It is found in the cytoplasm. The enzyme catalyses adenosine(2503) in 23S rRNA + 2 reduced [2Fe-2S]-[ferredoxin] + 2 S-adenosyl-L-methionine = 2-methyladenosine(2503) in 23S rRNA + 5'-deoxyadenosine + L-methionine + 2 oxidized [2Fe-2S]-[ferredoxin] + S-adenosyl-L-homocysteine. It catalyses the reaction adenosine(37) in tRNA + 2 reduced [2Fe-2S]-[ferredoxin] + 2 S-adenosyl-L-methionine = 2-methyladenosine(37) in tRNA + 5'-deoxyadenosine + L-methionine + 2 oxidized [2Fe-2S]-[ferredoxin] + S-adenosyl-L-homocysteine. Specifically methylates position 2 of adenine 2503 in 23S rRNA and position 2 of adenine 37 in tRNAs. m2A2503 modification seems to play a crucial role in the proofreading step occurring at the peptidyl transferase center and thus would serve to optimize ribosomal fidelity. The polypeptide is Dual-specificity RNA methyltransferase RlmN (Acinetobacter baumannii (strain AB307-0294)).